The sequence spans 173 residues: RNA pyrophosphohydrolase (173 aa).

The Nudix hydrolase domain occupies 6–149 (GFRANVGIIL…KRSVYRRALQ (144 aa)). The short motif at 38 to 59 (GGIDRGETPMDAMYRELWEEVG) is the Nudix box element.

This sequence belongs to the Nudix hydrolase family. RppH subfamily. It depends on a divalent metal cation as a cofactor.

In terms of biological role, accelerates the degradation of transcripts by removing pyrophosphate from the 5'-end of triphosphorylated RNA, leading to a more labile monophosphorylated state that can stimulate subsequent ribonuclease cleavage. The protein is RNA pyrophosphohydrolase of Psychrobacter cryohalolentis (strain ATCC BAA-1226 / DSM 17306 / VKM B-2378 / K5).